The following is a 540-amino-acid chain: MATPGAASAELVIGWCIFGLLLLAILAFCWIYVRKYQSRRESEVVSTITAIFSLAIALITSALLPVDIFLVSYMKNQNGTFKDWANANVSRQIEDTVLYGYYTLYSVILFCVFFWIPFVYFYYEEKDDDDTSKCTQIKTALKYTLGFVVICALLLLVGAFVPLNVPNNKNSTEWEKVKFLFEELGSSHGLAALSFSISSLTLIGMLAAITYTAYGMSALPLNLIKGTRSAAYERLENTEDIEEVEQHIQTIKSKSKDGRPLPARDKRALKQFEERLRTLKKRERHLEFIENSWWTKFCGALRPLKIIWGIFFILVALLFVISLFLSNLDKALHSAGIDSGFIIFGANLSNPLNMLLPLLQTVFPLDYILITIIIMYFIFTSMAGIRNIGIWFFWIRLYKIRRGRTRPQALLFLCMILLLIVLHTSYMIYSLAPQYVMYGSQNYLIETNITSDNHKGNSTLSVPKRCDADAPEDQCTVTRTYLFLHKFWFFSAAYYFGNWAFLGVFLIGLIVSCCKGKKSVIEGVDEDSDISDDEPSVYSV.

The Extracellular segment spans residues 1-10 (MATPGAASAE). A helical membrane pass occupies residues 11-31 (LVIGWCIFGLLLLAILAFCWI). Over 32–50 (YVRKYQSRRESEVVSTITA) the chain is Cytoplasmic. The helical transmembrane segment at 51-71 (IFSLAIALITSALLPVDIFLV) threads the bilayer. The Extracellular segment spans residues 72–100 (SYMKNQNGTFKDWANANVSRQIEDTVLYG). Residues Asn-78 and Asn-88 are each glycosylated (N-linked (GlcNAc...) asparagine). A helical membrane pass occupies residues 101–121 (YYTLYSVILFCVFFWIPFVYF). Topologically, residues 122 to 144 (YYEEKDDDDTSKCTQIKTALKYT) are cytoplasmic. A helical membrane pass occupies residues 145 to 165 (LGFVVICALLLLVGAFVPLNV). Topologically, residues 166–188 (PNNKNSTEWEKVKFLFEELGSSH) are extracellular. N-linked (GlcNAc...) asparagine glycosylation occurs at Asn-170. The helical transmembrane segment at 189–209 (GLAALSFSISSLTLIGMLAAI) threads the bilayer. Over 210-305 (TYTAYGMSAL…KFCGALRPLK (96 aa)) the chain is Cytoplasmic. The short motif at 232-235 (YERL) is the YERL motif; mediates interaction with adapter protein complex 2 and is essential for its function in clathrin-mediated endocytosis of INSR element. Thr-238 carries the phosphothreonine modification. Residues 294–297 (WTKF) carry the WTKF motif; mediates interaction with adapter protein complex 2 and is essential for its function in clathrin-mediated endocytosis of INSR motif. A helical transmembrane segment spans residues 306 to 326 (IIWGIFFILVALLFVISLFLS). Residues 327–364 (NLDKALHSAGIDSGFIIFGANLSNPLNMLLPLLQTVFP) are Extracellular-facing. Asn-347 is a glycosylation site (N-linked (GlcNAc...) asparagine). The chain crosses the membrane as a helical span at residues 365–385 (LDYILITIIIMYFIFTSMAGI). The Cytoplasmic portion of the chain corresponds to 386–408 (RNIGIWFFWIRLYKIRRGRTRPQ). Residues 409-429 (ALLFLCMILLLIVLHTSYMIY) traverse the membrane as a helical segment. Over 430–486 (SLAPQYVMYGSQNYLIETNITSDNHKGNSTLSVPKRCDADAPEDQCTVTRTYLFLHK) the chain is Extracellular. Asn-448 and Asn-457 each carry an N-linked (GlcNAc...) asparagine glycan. The chain crosses the membrane as a helical span at residues 487-507 (FWFFSAAYYFGNWAFLGVFLI). The Cytoplasmic portion of the chain corresponds to 508–540 (GLIVSCCKGKKSVIEGVDEDSDISDDEPSVYSV). A phosphoserine mark is found at Ser-528 and Ser-531.

Belongs to the LIMR family. LMBRD1 subfamily. Interacts with ABCD4; this interaction induces the translocation of ABCD4 from the endoplasmic reticulum to the lysosome. Interacts with ABCD4 and MMACHC; this interaction ensures the transport of cobalamin from the lysosome to the cytoplasm. Interacts with INSR, adapter protein complex 2 and clathrin heavy chain. Post-translationally, N-glycosylated.

The protein resides in the lysosome membrane. It is found in the cell membrane. It localises to the cytoplasmic vesicle. Its subcellular location is the clathrin-coated vesicle. In terms of biological role, lysosomal membrane chaperone required to export cobalamin (vitamin B12) from lysosome to the cytosol, allowing its conversion to cofactors. Targets ABCD4 transporter from the endoplasmic reticulum to the lysosomal membrane. Then forms a complex with lysosomal transporter ABCD4 and cytoplasmic MMACHC to transport cobalamin across the lysosomal membrane. Acts as an adapter protein which plays an important role in mediating and regulating the internalization of the insulin receptor (INSR). Involved in clathrin-mediated endocytosis of INSR via its interaction with adapter protein complex 2. Essential for the initiation of gastrulation and early formation of mesoderm structures during embryogenesis. The polypeptide is Lysosomal cobalamin transport escort protein LMBD1 (LMBRD1) (Macaca fascicularis (Crab-eating macaque)).